The following is a 376-amino-acid chain: MKIVVDENMPYVEPLFGALGEIIPVNGRTLTPEQVQDADVLLVRSVTRVNAALLDANPKLKFVGSATIGTDHVDLAYLAGRGIPFSNAPGCNATAVGEFAFIAMLELAARFNSPLKGKVVGIVGAGNTGSATAKCLEAYGIKVLLNDPIKAAEGDPRHFVSLETLLLEADIISLHVPITRSGEHKTLHLFDEARLMSLKPNIWLVNCCRGDVIDNQALIKVKKQRDDLKLVLDVWEGEPHPMPELVPFAEFATPHIAGYSLEGKARGTFMLYQKLCELLAIPANKRLSELLPPFHFKAVELEQTPDEKALLQLARFVYDLRDDDAVFRNGFARSNGFDTMRKNHKHRREFSALALAYHGQSEVDWLSNLGFSGVGR.

Residues serine 45 and threonine 67 each coordinate substrate. Residue aspartate 147 participates in NAD(+) binding. The active site involves arginine 209. Residue aspartate 233 coordinates NAD(+). Glutamate 238 is a catalytic residue. Histidine 255 serves as the catalytic Proton donor. NAD(+) is bound at residue glycine 258. Tyrosine 259 provides a ligand contact to substrate.

The protein belongs to the D-isomer specific 2-hydroxyacid dehydrogenase family. PdxB subfamily. As to quaternary structure, homodimer.

Its subcellular location is the cytoplasm. It catalyses the reaction 4-phospho-D-erythronate + NAD(+) = (R)-3-hydroxy-2-oxo-4-phosphooxybutanoate + NADH + H(+). Its pathway is cofactor biosynthesis; pyridoxine 5'-phosphate biosynthesis; pyridoxine 5'-phosphate from D-erythrose 4-phosphate: step 2/5. Functionally, catalyzes the oxidation of erythronate-4-phosphate to 3-hydroxy-2-oxo-4-phosphonooxybutanoate. The protein is Erythronate-4-phosphate dehydrogenase of Shewanella sp. (strain MR-7).